Here is a 579-residue protein sequence, read N- to C-terminus: Fatty-acid amide hydrolase 1 (579 aa).

A helical transmembrane segment spans residues 9-29 (ALSGLSGVCLACSLLSAAVVL). Residues 30 to 403 (RWTRSQTARG…GDFVDPCLGD (374 aa)) lie on the Cytoplasmic side of the membrane. The active-site Charge relay system is lysine 142. Substrate is bound by residues methionine 191, serine 217, and 238 to 241 (IGGS). The active-site Charge relay system is serine 217. Serine 241 (acyl-ester intermediate) is an active-site residue. Serine 241 carries the phosphoserine modification. Residues 404–433 (LVLVLKLPRWFKKLLSFLLKPLFPRLAAFL) lie within the membrane without spanning it. The Cytoplasmic portion of the chain corresponds to 434–579 (NSMCPRSAEK…RLMTPEKRPS (146 aa)).

The protein belongs to the amidase family. Homodimer.

It is found in the endoplasmic reticulum membrane. It localises to the golgi apparatus membrane. It catalyses the reaction N-(5Z,8Z,11Z,14Z-eicosatetraenoyl)-ethanolamine + H2O = ethanolamine + (5Z,8Z,11Z,14Z)-eicosatetraenoate. The enzyme catalyses (9Z)-octadecenamide + H2O = (9Z)-octadecenoate + NH4(+). The catalysed reaction is 2-(5Z,8Z,11Z,14Z-eicosatetraenoyl)-glycerol + H2O = glycerol + (5Z,8Z,11Z,14Z)-eicosatetraenoate + H(+). It carries out the reaction N-(9Z-hexadecenoyl) ethanolamine + H2O = (9Z)-hexadecenoate + ethanolamine. It catalyses the reaction N-(9Z-octadecenoyl) ethanolamine + H2O = ethanolamine + (9Z)-octadecenoate. The enzyme catalyses N-octadecanoyl ethanolamine + H2O = octadecanoate + ethanolamine. The catalysed reaction is N-docosanoyl-ethanolamine + H2O = docosanoate + ethanolamine. It carries out the reaction N-tetracosanoyl-taurine + H2O = tetracosanoate + taurine. It catalyses the reaction N-(15Z-tetracosenoyl)-ethanolamine + H2O = (15Z)-tetracosenoate + ethanolamine. The enzyme catalyses N-(9Z-octadecenoyl)-taurine + H2O = taurine + (9Z)-octadecenoate. The catalysed reaction is N-docosanoyl-taurine + H2O = docosanoate + taurine. It carries out the reaction N-(15Z-tetracosenoyl)-taurine + H2O = (15Z)-tetracosenoate + taurine. It catalyses the reaction N-tricosanoyl-taurine + H2O = tricosanoate + taurine. The enzyme catalyses (9Z,12Z,15Z)-octadecatrienamide + H2O = (9Z,12Z,15Z)-octadecatrienoate + NH4(+). The catalysed reaction is (5Z,8Z,11Z,14Z)-eicosatetraenamide + H2O = (5Z,8Z,11Z,14Z)-eicosatetraenoate + NH4(+). It carries out the reaction (6Z)-octadecenamide + H2O = (6Z)-octadecenoate + NH4(+). It catalyses the reaction (15Z)-tetracosenamide + H2O = (15Z)-tetracosenoate + NH4(+). The enzyme catalyses (8Z,11Z,14Z)-eicosatrienamide + H2O = (8Z,11Z,14Z)-eicosatrienoate + NH4(+). The catalysed reaction is (11Z,14Z,17Z)-eicosatrienamide + H2O = (11Z,14Z,17Z)-eicosatrienoate + NH4(+). It carries out the reaction (11Z,14Z)-eicosadienamide + H2O = (11Z,14Z)-eicosadienoate + NH4(+). It catalyses the reaction (9Z,12Z)-octadecadienamide + H2O = (9Z,12Z)-octadecadienoate + NH4(+). The enzyme catalyses tetradecamide + H2O = tetradecanoate + NH4(+). The catalysed reaction is 1-O-methyl-(5Z,8Z,11Z,14Z)-eicosatetraenoate + H2O = methanol + (5Z,8Z,11Z,14Z)-eicosatetraenoate + H(+). It carries out the reaction (11Z)-eicosenamide + H2O = (11Z)-eicosenoate + NH4(+). It catalyses the reaction (9Z)-octadecenoate + glycine = N-(9Z-octadecenoyl)glycine + H2O. The enzyme catalyses N-(5Z,8Z,11Z,14Z)-eicosatetraenoyl-glycine + H2O = (5Z,8Z,11Z,14Z)-eicosatetraenoate + glycine. The catalysed reaction is N-(5Z,8Z,11Z,14Z-eicosatetraenoyl)-L-serine + H2O = (5Z,8Z,11Z,14Z)-eicosatetraenoate + L-serine. With respect to regulation, inhibited the trifluoromethyl compound PF-3845. Catalyzes the hydrolysis of endogenous amidated lipids like the endocannabinoid anandamide (N-(5Z,8Z,11Z,14Z-eicosatetraenoyl)-ethanolamine), as well as other fatty amides such as the taurine-conjugated fatty acids (a structural class of central nervous system (CNS) metabolites), to their corresponding fatty acids, thereby regulating the signaling functions of these molecules. FAAH cooperates with PM20D1 in the hydrolysis of amino acid-conjugated fatty acids such as N-fatty acyl glycine and N-fatty acyl-L-serine, thereby acting as a physiological regulator of specific subsets of intracellular, but not of extracellular, N-fatty acyl amino acids. It can also catalyze the hydrolysis of the endocannabinoid 2-arachidonoylglycerol (2-(5Z,8Z,11Z,14Z-eicosatetraenoyl)-glycerol). The sequence is that of Fatty-acid amide hydrolase 1 (Faah) from Mus musculus (Mouse).